A 360-amino-acid chain; its full sequence is UPF0324 membrane protein plu2856 (360 aa).

9 helical membrane passes run 20–42, 47–69, 104–126, 136–155, 167–189, 239–256, 277–299, 304–326, and 333–355; these read LIPGLILAAILTAISIYAGNIPW, GLGTLTLAILAGIIVGNTVYPLL, VGITGLLIDAAMLSSTFFIAIWL, QTVILIGAGSSICGAAAIMA, VAVAVSTIVIFGTIAIFIYPWFY, MIRVMMLAPFLLLLSRYI, WFAVIFIAIAGFNSFNLLPAAIV, NIDTIMLTMAMGALGLTTHVSAI, and PILLALILFVWLMAGGLLINLGI.

Belongs to the UPF0324 family.

Its subcellular location is the cell membrane. This is UPF0324 membrane protein plu2856 from Photorhabdus laumondii subsp. laumondii (strain DSM 15139 / CIP 105565 / TT01) (Photorhabdus luminescens subsp. laumondii).